Here is a 356-residue protein sequence, read N- to C-terminus: Riboflavin biosynthesis protein RibD (356 aa).

The segment at 1-148 (MIREIDKNYM…EDFFTYITQE (148 aa)) is deaminase. Positions 4–126 (EIDKNYMKLA…KLRNAGIEVD (123 aa)) constitute a CMP/dCMP-type deaminase domain. Position 53 (H53) interacts with Zn(2+). Residue E55 is the Proton donor of the active site. Positions 78 and 87 each coordinate Zn(2+). The tract at residues 149 to 356 (RPYITLKWAQ…EDLVIFFKRY (208 aa)) is reductase. NADP(+) is bound at residue A157. S171 lines the substrate pocket. W173 provides a ligand contact to NADP(+). R187 serves as a coordination point for substrate. NADP(+) is bound by residues T199 and D203. Residues L207, R210, and E290 each contribute to the substrate site. NADP(+) is bound at residue 292–298 (GPRTLTS).

The protein in the N-terminal section; belongs to the cytidine and deoxycytidylate deaminase family. This sequence in the C-terminal section; belongs to the HTP reductase family. The cofactor is Zn(2+).

It carries out the reaction 2,5-diamino-6-hydroxy-4-(5-phosphoribosylamino)-pyrimidine + H2O + H(+) = 5-amino-6-(5-phospho-D-ribosylamino)uracil + NH4(+). The catalysed reaction is 5-amino-6-(5-phospho-D-ribitylamino)uracil + NADP(+) = 5-amino-6-(5-phospho-D-ribosylamino)uracil + NADPH + H(+). Its pathway is cofactor biosynthesis; riboflavin biosynthesis; 5-amino-6-(D-ribitylamino)uracil from GTP: step 2/4. It participates in cofactor biosynthesis; riboflavin biosynthesis; 5-amino-6-(D-ribitylamino)uracil from GTP: step 3/4. Converts 2,5-diamino-6-(ribosylamino)-4(3h)-pyrimidinone 5'-phosphate into 5-amino-6-(ribosylamino)-2,4(1h,3h)-pyrimidinedione 5'-phosphate. This is Riboflavin biosynthesis protein RibD (ribD) from Aquifex aeolicus (strain VF5).